Consider the following 233-residue polypeptide: tRNA (guanine-N(7)-)-methyltransferase (233 aa).

S-adenosyl-L-methionine-binding residues include Glu65, Glu90, Asp117, and Asp139. Asp139 is a catalytic residue. Residues Lys143, Asp175, and 212–215 each bind substrate; that span reads TRYE.

The protein belongs to the class I-like SAM-binding methyltransferase superfamily. TrmB family.

The catalysed reaction is guanosine(46) in tRNA + S-adenosyl-L-methionine = N(7)-methylguanosine(46) in tRNA + S-adenosyl-L-homocysteine. Its pathway is tRNA modification; N(7)-methylguanine-tRNA biosynthesis. Functionally, catalyzes the formation of N(7)-methylguanine at position 46 (m7G46) in tRNA. The protein is tRNA (guanine-N(7)-)-methyltransferase of Roseobacter denitrificans (strain ATCC 33942 / OCh 114) (Erythrobacter sp. (strain OCh 114)).